Consider the following 224-residue polypeptide: UPF0173 metal-dependent hydrolase EAT1b_0495 (224 aa).

The protein belongs to the UPF0173 family.

The protein is UPF0173 metal-dependent hydrolase EAT1b_0495 of Exiguobacterium sp. (strain ATCC BAA-1283 / AT1b).